The chain runs to 346 residues: Patr class I histocompatibility antigen, CH28 alpha chain (346 aa).

Positions 1 to 21 (MAPRSLLLLFSGALALTETWA) are cleaved as a signal peptide. The segment at 22–111 (GSHSLRYFST…LLRRYNQSEA (90 aa)) is alpha-1. Residues 22–305 (GSHSLRYFST…EQSPQPTIPI (284 aa)) are Extracellular-facing. Residue asparagine 107 is glycosylated (N-linked (GlcNAc...) asparagine). The alpha-2 stretch occupies residues 112 to 203 (GSHTLQGMNG…ENGKETLQRA (92 aa)). 2 disulfide bridges follow: cysteine 122-cysteine 185 and cysteine 224-cysteine 280. Residues 204-295 (DPPKAHIAHH…GLPQPLTLRW (92 aa)) form an alpha-3 region. The Ig-like C1-type domain maps to 206-294 (PKAHIAHHPI…EGLPQPLTLR (89 aa)). The connecting peptide stretch occupies residues 296–305 (EQSPQPTIPI). Residues 306 to 329 (VGIVAGLVVLGAVVTGAVVAAVMW) form a helical membrane-spanning segment. Topologically, residues 330 to 346 (RKKSSDRNRGSYSQAAV) are cytoplasmic.

The protein belongs to the MHC class I family. As to quaternary structure, heterodimer of an alpha chain and a beta chain (beta-2-microglobulin).

The protein resides in the membrane. Involved in the presentation of foreign antigens to the immune system. The protein is Patr class I histocompatibility antigen, CH28 alpha chain of Pan troglodytes (Chimpanzee).